The following is a 243-amino-acid chain: ATP-dependent dethiobiotin synthetase BioD (243 aa).

Residue 12-17 (DVGKTL) participates in ATP binding. Threonine 16 is a binding site for Mg(2+). Lysine 37 is an active-site residue. Substrate is bound at residue serine 41. Residues aspartate 54, 115 to 118 (EGCG), and 179 to 180 (NM) each bind ATP. The Mg(2+) site is built by aspartate 54 and glutamate 115.

This sequence belongs to the dethiobiotin synthetase family. As to quaternary structure, homodimer. It depends on Mg(2+) as a cofactor.

The protein localises to the cytoplasm. The enzyme catalyses (7R,8S)-7,8-diammoniononanoate + CO2 + ATP = (4R,5S)-dethiobiotin + ADP + phosphate + 3 H(+). Its pathway is cofactor biosynthesis; biotin biosynthesis; biotin from 7,8-diaminononanoate: step 1/2. Catalyzes a mechanistically unusual reaction, the ATP-dependent insertion of CO2 between the N7 and N8 nitrogen atoms of 7,8-diaminopelargonic acid (DAPA, also called 7,8-diammoniononanoate) to form a ureido ring. The chain is ATP-dependent dethiobiotin synthetase BioD from Caldicellulosiruptor saccharolyticus (strain ATCC 43494 / DSM 8903 / Tp8T 6331).